The chain runs to 170 residues: Peptide deformylase (170 aa).

Residues C91 and H133 each coordinate Fe cation. The active site involves E134. H137 provides a ligand contact to Fe cation.

The protein belongs to the polypeptide deformylase family. It depends on Fe(2+) as a cofactor.

The catalysed reaction is N-terminal N-formyl-L-methionyl-[peptide] + H2O = N-terminal L-methionyl-[peptide] + formate. Functionally, removes the formyl group from the N-terminal Met of newly synthesized proteins. Requires at least a dipeptide for an efficient rate of reaction. N-terminal L-methionine is a prerequisite for activity but the enzyme has broad specificity at other positions. This is Peptide deformylase from Glaesserella parasuis serovar 5 (strain SH0165) (Haemophilus parasuis).